Consider the following 78-residue polypeptide: Signal peptidase complex subunit 1 (78 aa).

Residues 1 to 18 lie on the Cytoplasmic side of the membrane; the sequence is MNYLEGTIDFAGQLRCQK. Residues 19-38 traverse the membrane as a helical segment; the sequence is YMNYGLCTSAVISYIYGYLV. The Lumenal portion of the chain corresponds to 39 to 42; sequence QDSY. Residues 43–63 form a helical membrane-spanning segment; that stretch reads CVIKLFLILASLVALVCLPAW. The Cytoplasmic portion of the chain corresponds to 64–78; that stretch reads SMYNKNPLKFQKKKE.

Belongs to the SPCS1 family. Component of the signal peptidase complex (SPC) composed of a catalytic subunit sec11 and three accessory subunits spc1, spc2 and spc3. The complex induces a local thinning of the ER membrane which is used to measure the length of the signal peptide (SP) h-region of protein substrates. This ensures the selectivity of the complex towards h-regions shorter than 18-20 amino acids. SPC associates with the translocon complex.

Its subcellular location is the endoplasmic reticulum membrane. Component of the signal peptidase complex (SPC) which catalyzes the cleavage of N-terminal signal sequences from nascent proteins as they are translocated into the lumen of the endoplasmic reticulum. Dispensable for SPC enzymatic activity. The chain is Signal peptidase complex subunit 1 from Schizosaccharomyces pombe (strain 972 / ATCC 24843) (Fission yeast).